A 149-amino-acid polypeptide reads, in one-letter code: Transcriptional repressor NrdR (149 aa).

The segment at 3-34 (CPFCSATDTKVIDSRLVSDGHQVRRRRQCLAC) is a zinc-finger region. Residues 49–139 (PKVIKSNGNR…VYRSFEDIKE (91 aa)) form the ATP-cone domain.

The protein belongs to the NrdR family. It depends on Zn(2+) as a cofactor.

In terms of biological role, negatively regulates transcription of bacterial ribonucleotide reductase nrd genes and operons by binding to NrdR-boxes. This is Transcriptional repressor NrdR from Aliivibrio fischeri (strain ATCC 700601 / ES114) (Vibrio fischeri).